Here is a 43-residue protein sequence, read N- to C-terminus: Protein PsbN (43 aa).

A helical transmembrane segment spans residues 5 to 27; it reads TLVAISISGLLVSFTGYALYTAF.

The protein belongs to the PsbN family.

The protein resides in the plastid. It is found in the chloroplast thylakoid membrane. Its function is as follows. May play a role in photosystem I and II biogenesis. The sequence is that of Protein PsbN from Houttuynia cordata (Chameleon plant).